Consider the following 65-residue polypeptide: Small ribosomal subunit protein bS21 (65 aa).

The protein belongs to the bacterial ribosomal protein bS21 family.

This Flavobacterium psychrophilum (strain ATCC 49511 / DSM 21280 / CIP 103535 / JIP02/86) protein is Small ribosomal subunit protein bS21.